The sequence spans 353 residues: Protein RecA (353 aa).

64-71 (GPESSGKT) is an ATP binding site. Positions 331–353 (LEEASAQKEEVPVEDKLFDDELE) are disordered. Positions 335 to 346 (SAQKEEVPVEDK) are enriched in basic and acidic residues.

It belongs to the RecA family.

It is found in the cytoplasm. Can catalyze the hydrolysis of ATP in the presence of single-stranded DNA, the ATP-dependent uptake of single-stranded DNA by duplex DNA, and the ATP-dependent hybridization of homologous single-stranded DNAs. It interacts with LexA causing its activation and leading to its autocatalytic cleavage. This Macrococcus caseolyticus (strain JCSC5402) (Macrococcoides caseolyticum) protein is Protein RecA.